Reading from the N-terminus, the 116-residue chain is NADH-ubiquinone oxidoreductase chain 3 (116 aa).

3 helical membrane-spanning segments follow: residues 4 to 24, 56 to 76, and 87 to 107; these read FMVM…LAFW, FFLV…LLPS, and FTLL…IYEW.

The protein belongs to the complex I subunit 3 family.

It localises to the mitochondrion membrane. It catalyses the reaction a ubiquinone + NADH + 5 H(+)(in) = a ubiquinol + NAD(+) + 4 H(+)(out). Its function is as follows. Core subunit of the mitochondrial membrane respiratory chain NADH dehydrogenase (Complex I) that is believed to belong to the minimal assembly required for catalysis. Complex I functions in the transfer of electrons from NADH to the respiratory chain. The immediate electron acceptor for the enzyme is believed to be ubiquinone. This is NADH-ubiquinone oxidoreductase chain 3 (MT-ND3) from Petromyzon marinus (Sea lamprey).